The following is a 514-amino-acid chain: Membrane-bound lytic murein transglycosylase F (514 aa).

Residues 1 to 30 (MKKLKINYLFIGILTLLLAAALWPSIPWFG) form the signal peptide. The interval 31–269 (KTENHIAAIQ…RIEEKYLGHG (239 aa)) is non-LT domain. Residues 270-514 (DDFDYVDTRS…LFTPQKKEEK (245 aa)) form an LT domain region. Glu314 is a catalytic residue.

It in the N-terminal section; belongs to the bacterial solute-binding protein 3 family. The protein in the C-terminal section; belongs to the transglycosylase Slt family.

Its subcellular location is the cell outer membrane. It catalyses the reaction Exolytic cleavage of the (1-&gt;4)-beta-glycosidic linkage between N-acetylmuramic acid (MurNAc) and N-acetylglucosamine (GlcNAc) residues in peptidoglycan, from either the reducing or the non-reducing ends of the peptidoglycan chains, with concomitant formation of a 1,6-anhydrobond in the MurNAc residue.. Its function is as follows. Murein-degrading enzyme that degrades murein glycan strands and insoluble, high-molecular weight murein sacculi, with the concomitant formation of a 1,6-anhydromuramoyl product. Lytic transglycosylases (LTs) play an integral role in the metabolism of the peptidoglycan (PG) sacculus. Their lytic action creates space within the PG sacculus to allow for its expansion as well as for the insertion of various structures such as secretion systems and flagella. This chain is Membrane-bound lytic murein transglycosylase F, found in Salmonella choleraesuis (strain SC-B67).